A 505-amino-acid polypeptide reads, in one-letter code: Protein nucleotidyltransferase YdiU (505 aa).

ATP contacts are provided by G102, G104, R105, K125, D137, G138, R188, and R195. The active-site Proton acceptor is the D264. 2 residues coordinate Mg(2+): N265 and D274. D274 serves as a coordination point for ATP.

Belongs to the SELO family. Requires Mg(2+) as cofactor. Mn(2+) is required as a cofactor.

The enzyme catalyses L-seryl-[protein] + ATP = 3-O-(5'-adenylyl)-L-seryl-[protein] + diphosphate. It catalyses the reaction L-threonyl-[protein] + ATP = 3-O-(5'-adenylyl)-L-threonyl-[protein] + diphosphate. It carries out the reaction L-tyrosyl-[protein] + ATP = O-(5'-adenylyl)-L-tyrosyl-[protein] + diphosphate. The catalysed reaction is L-histidyl-[protein] + UTP = N(tele)-(5'-uridylyl)-L-histidyl-[protein] + diphosphate. The enzyme catalyses L-seryl-[protein] + UTP = O-(5'-uridylyl)-L-seryl-[protein] + diphosphate. It catalyses the reaction L-tyrosyl-[protein] + UTP = O-(5'-uridylyl)-L-tyrosyl-[protein] + diphosphate. In terms of biological role, nucleotidyltransferase involved in the post-translational modification of proteins. It can catalyze the addition of adenosine monophosphate (AMP) or uridine monophosphate (UMP) to a protein, resulting in modifications known as AMPylation and UMPylation. The chain is Protein nucleotidyltransferase YdiU from Nitrobacter winogradskyi (strain ATCC 25391 / DSM 10237 / CIP 104748 / NCIMB 11846 / Nb-255).